The following is a 219-amino-acid chain: ATP-dependent dethiobiotin synthetase BioD (219 aa).

Residue 12-17 coordinates ATP; sequence DLGKTH. Thr-16 provides a ligand contact to Mg(2+). The active site involves Lys-37. Position 41 (Ser-41) interacts with substrate. ATP is bound by residues Asp-52, 115-118, and 175-176; these read EGAG and SE. Mg(2+) is bound by residues Asp-52 and Glu-115.

The protein belongs to the dethiobiotin synthetase family. In terms of assembly, homodimer. The cofactor is Mg(2+).

Its subcellular location is the cytoplasm. The catalysed reaction is (7R,8S)-7,8-diammoniononanoate + CO2 + ATP = (4R,5S)-dethiobiotin + ADP + phosphate + 3 H(+). Its pathway is cofactor biosynthesis; biotin biosynthesis; biotin from 7,8-diaminononanoate: step 1/2. Its function is as follows. Catalyzes a mechanistically unusual reaction, the ATP-dependent insertion of CO2 between the N7 and N8 nitrogen atoms of 7,8-diaminopelargonic acid (DAPA, also called 7,8-diammoniononanoate) to form a ureido ring. This Caulobacter vibrioides (strain ATCC 19089 / CIP 103742 / CB 15) (Caulobacter crescentus) protein is ATP-dependent dethiobiotin synthetase BioD.